Consider the following 211-residue polypeptide: Large ribosomal subunit protein eL13 (211 aa).

N6-acetyllysine is present on lysine 16. A phosphoserine mark is found at serine 77 and serine 106. Residues lysine 123 and lysine 145 each participate in a glycyl lysine isopeptide (Lys-Gly) (interchain with G-Cter in SUMO2) cross-link. A Glycyl lysine isopeptide (Lys-Gly) (interchain with G-Cter in SUMO1); alternate cross-link involves residue lysine 174. Residues lysine 174 and lysine 177 each participate in a glycyl lysine isopeptide (Lys-Gly) (interchain with G-Cter in SUMO2); alternate cross-link. Lysine 177 bears the N6-acetyllysine; alternate mark.

This sequence belongs to the eukaryotic ribosomal protein eL13 family. As to quaternary structure, component of the 60S large ribosomal subunit (LSU).

The protein resides in the cytoplasm. Functionally, component of the ribosome, a large ribonucleoprotein complex responsible for the synthesis of proteins in the cell. The small ribosomal subunit (SSU) binds messenger RNAs (mRNAs) and translates the encoded message by selecting cognate aminoacyl-transfer RNA (tRNA) molecules. The large subunit (LSU) contains the ribosomal catalytic site termed the peptidyl transferase center (PTC), which catalyzes the formation of peptide bonds, thereby polymerizing the amino acids delivered by tRNAs into a polypeptide chain. The nascent polypeptides leave the ribosome through a tunnel in the LSU and interact with protein factors that function in enzymatic processing, targeting, and the membrane insertion of nascent chains at the exit of the ribosomal tunnel. As part of the LSU, it is probably required for its formation and the maturation of rRNAs. Plays a role in bone development. The protein is Large ribosomal subunit protein eL13 (RPL13) of Oryctolagus cuniculus (Rabbit).